Consider the following 117-residue polypeptide: uncharacterized protein (117 aa).

Positions 5–50 form a coiled coil; that stretch reads DKIHNTNEQITALEKKKYQIETTLLEKQRDLLKLETQQNKAKLELL.

This is an uncharacterized protein from Bacillus pumilus (Bacillus mesentericus).